An 87-amino-acid polypeptide reads, in one-letter code: MKTFDELYAELTEKARTRPAGSRTVAELDAGVHAIGKKVLEEAAEAWMAAEHESDEATAEEISQLLYHAQVLMIARGIDLQAVYRHL.

This sequence belongs to the PRA-PH family.

It localises to the cytoplasm. It catalyses the reaction 1-(5-phospho-beta-D-ribosyl)-ATP + H2O = 1-(5-phospho-beta-D-ribosyl)-5'-AMP + diphosphate + H(+). The protein operates within amino-acid biosynthesis; L-histidine biosynthesis; L-histidine from 5-phospho-alpha-D-ribose 1-diphosphate: step 2/9. This is Phosphoribosyl-ATP pyrophosphatase from Beutenbergia cavernae (strain ATCC BAA-8 / DSM 12333 / CCUG 43141 / JCM 11478 / NBRC 16432 / NCIMB 13614 / HKI 0122).